Here is a 359-residue protein sequence, read N- to C-terminus: Stearoyl-CoA desaturase (359 aa).

Over M1–V72 the chain is Cytoplasmic. The helical transmembrane segment at W73–I93 threads the bilayer. N75 contacts substrate. Residues P94 to K97 are Lumenal-facing. The helical transmembrane segment at F98 to G118 threads the bilayer. Residues A119 to Y217 are Cytoplasmic-facing. The Fe cation site is built by H120 and H125. Residues H120–H125 carry the Histidine box-1 motif. Residues N148, R155, and D156 each coordinate substrate. Fe cation is bound by residues H157, H160, and H161. The Histidine box-2 signature appears at H157–H161. 2 residues coordinate substrate: R188 and K189. Residues S198 and S203 each carry the phosphoserine modification. A helical transmembrane segment spans residues Y218 to F237. Topologically, residues W238–T241 are lumenal. Residues F242 to L263 traverse the membrane as a helical segment. W262 contributes to the substrate binding site. Residues V264–G359 lie on the Cytoplasmic side of the membrane. Residues H269, H298, H301, and H302 each coordinate Fe cation. A Histidine box-3 motif is present at residues H298–H302.

This sequence belongs to the fatty acid desaturase type 1 family. As to quaternary structure, may self-associate and form homodimers. Fe(2+) is required as a cofactor. In terms of tissue distribution, detected in fetal liver, lung and brain. Highly expressed in adult adipose tissue, and at lower levels in adult brain and lung.

Its subcellular location is the endoplasmic reticulum membrane. The enzyme catalyses octadecanoyl-CoA + 2 Fe(II)-[cytochrome b5] + O2 + 2 H(+) = (9Z)-octadecenoyl-CoA + 2 Fe(III)-[cytochrome b5] + 2 H2O. It carries out the reaction hexadecanoyl-CoA + 2 Fe(II)-[cytochrome b5] + O2 + 2 H(+) = (9Z)-hexadecenoyl-CoA + 2 Fe(III)-[cytochrome b5] + 2 H2O. Functionally, stearoyl-CoA desaturase that utilizes O(2) and electrons from reduced cytochrome b5 to introduce the first double bond into saturated fatty acyl-CoA substrates. Catalyzes the insertion of a cis double bond at the delta-9 position into fatty acyl-CoA substrates including palmitoyl-CoA and stearoyl-CoA. Gives rise to a mixture of 16:1 and 18:1 unsaturated fatty acids. Plays an important role in lipid biosynthesis. Plays an important role in regulating the expression of genes that are involved in lipogenesis and in regulating mitochondrial fatty acid oxidation. Plays an important role in body energy homeostasis. Contributes to the biosynthesis of membrane phospholipids, cholesterol esters and triglycerides. The protein is Stearoyl-CoA desaturase (SCD) of Homo sapiens (Human).